The primary structure comprises 153 residues: Protein-export protein SecB (153 aa).

This sequence belongs to the SecB family. As to quaternary structure, homotetramer, a dimer of dimers. One homotetramer interacts with 1 SecA dimer.

It localises to the cytoplasm. Its function is as follows. One of the proteins required for the normal export of preproteins out of the cell cytoplasm. It is a molecular chaperone that binds to a subset of precursor proteins, maintaining them in a translocation-competent state. It also specifically binds to its receptor SecA. The protein is Protein-export protein SecB of Edwardsiella ictaluri (strain 93-146).